A 943-amino-acid chain; its full sequence is Isoleucine--tRNA ligase (943 aa).

Residues 59-69 (PYANGRIHLGH) carry the 'HIGH' region motif. Residue E577 coordinates L-isoleucyl-5'-AMP. Positions 618–622 (KMSKS) match the 'KMSKS' region motif. K621 lines the ATP pocket. Zn(2+)-binding residues include C906, C909, C926, and C929.

It belongs to the class-I aminoacyl-tRNA synthetase family. IleS type 1 subfamily. As to quaternary structure, monomer. Zn(2+) serves as cofactor.

Its subcellular location is the cytoplasm. The enzyme catalyses tRNA(Ile) + L-isoleucine + ATP = L-isoleucyl-tRNA(Ile) + AMP + diphosphate. Functionally, catalyzes the attachment of isoleucine to tRNA(Ile). As IleRS can inadvertently accommodate and process structurally similar amino acids such as valine, to avoid such errors it has two additional distinct tRNA(Ile)-dependent editing activities. One activity is designated as 'pretransfer' editing and involves the hydrolysis of activated Val-AMP. The other activity is designated 'posttransfer' editing and involves deacylation of mischarged Val-tRNA(Ile). The polypeptide is Isoleucine--tRNA ligase (Stenotrophomonas maltophilia (strain R551-3)).